Consider the following 257-residue polypeptide: Probable amino-acid ABC transporter-binding protein HI_1080 (257 aa).

The signal sequence occupies residues 1-23 (MKKLLFTTALLTGAIAFSTFSHA).

This sequence belongs to the bacterial solute-binding protein 3 family.

The protein localises to the periplasm. Functionally, probably part of a binding-protein-dependent transport system for an amino acid. In Haemophilus influenzae (strain ATCC 51907 / DSM 11121 / KW20 / Rd), this protein is Probable amino-acid ABC transporter-binding protein HI_1080.